The following is a 69-amino-acid chain: DNA gyrase inhibitor YacG (69 aa).

Zn(2+) contacts are provided by Cys14, Cys17, Cys33, and Cys37. The interval Ala46–Tyr69 is disordered. Residues Ser59–Tyr69 are compositionally biased toward acidic residues.

This sequence belongs to the DNA gyrase inhibitor YacG family. Interacts with GyrB. It depends on Zn(2+) as a cofactor.

In terms of biological role, inhibits all the catalytic activities of DNA gyrase by preventing its interaction with DNA. Acts by binding directly to the C-terminal domain of GyrB, which probably disrupts DNA binding by the gyrase. The protein is DNA gyrase inhibitor YacG of Aliivibrio fischeri (strain ATCC 700601 / ES114) (Vibrio fischeri).